Consider the following 996-residue polypeptide: Oxysterol-binding protein homolog 3 (996 aa).

Positions 1–183 are GOLD domain; it reads METIDIQNRS…KKKILFNASV (183 aa). The interval 75 to 114 is disordered; the sequence is GSSSNIEEHHRRSSQHSHSSSNGSDNKRKERSYSSLSISG. A phosphoserine mark is found at Ser-190 and Ser-193. At Thr-210 the chain carries Phosphothreonine. One can recognise a PH domain in the interval 221 to 315; it reads GRYLQGYLLK…WVDALQTCFD (95 aa). Position 323 is a phosphothreonine (Thr-323). Phosphoserine is present on Ser-324. Thr-325 and Thr-352 each carry phosphothreonine. The interval 338–372 is disordered; sequence EVINKSSPQDHDHLTPTATTKSALSHRQHTQKDMD. Residues 514–520 carry the FFAT motif; sequence EFFDAEE. Residues 556–611 form a disordered region; it reads KEVQLSGSEQIASSSVESYTTNDENHSRKHLKNRHKNRRRGHPHHQKTKSAQSSTE. Residues 558–577 show a composition bias toward polar residues; the sequence is VQLSGSEQIASSSVESYTTN. The segment covering 582-603 has biased composition (basic residues); the sequence is SRKHLKNRHKNRRRGHPHHQKT. The residue at position 605 (Ser-605) is a Phosphoserine. The interval 642–982 is OSBP-related domain (ORD); that stretch reads SLLSFLRKNV…YITGPKSYWE (341 aa). A 1,2-diacyl-sn-glycero-3-phospho-(1D-myo-inositol 4-phosphate) contacts are provided by residues 657–660, Lys-717, 745–746, and 945–949; these read SIAM, HR, and EQLQR.

It belongs to the OSBP family. In terms of assembly, interacts with SCS2.

The protein resides in the cytoplasm. Its subcellular location is the endoplasmic reticulum membrane. Its function is as follows. Lipid transport protein (LTP) involved in non-vesicular transfer of lipids between membranes. Functions in phosphoinositide-coupled directional transport of various lipids by carrying the lipid molecule in a hydrophobic pocket and transferring it between membranes through the cytosol. Involved in maintenance of intracellular sterol distribution and homeostasis. May serve as a sensor of PI4P levels at PM-ER membrane contact site, regulating PI4P phosphatase SAC1 activity. May be involved in ergosterol transport from the plasma membrane (PM) to the ER, however it does not bind sterols directly. Plays a role in the positive regulation of vesicular transport of ceramide from the ER to the Golgi, negatively regulating COPII-mediated ER export of cargos. This Saccharomyces cerevisiae (strain ATCC 204508 / S288c) (Baker's yeast) protein is Oxysterol-binding protein homolog 3.